The sequence spans 532 residues: 2,3-bisphosphoglycerate-independent phosphoglycerate mutase (532 aa).

D13 and S63 together coordinate Mn(2+). Catalysis depends on S63, which acts as the Phosphoserine intermediate. Residues H124, 154-155 (RD), R187, R193, 262-265 (RPDR), and K343 contribute to the substrate site. Mn(2+)-binding residues include D421, H425, D463, H464, and H481.

It belongs to the BPG-independent phosphoglycerate mutase family. Monomer. The cofactor is Mn(2+).

It carries out the reaction (2R)-2-phosphoglycerate = (2R)-3-phosphoglycerate. It participates in carbohydrate degradation; glycolysis; pyruvate from D-glyceraldehyde 3-phosphate: step 3/5. Catalyzes the interconversion of 2-phosphoglycerate and 3-phosphoglycerate. This chain is 2,3-bisphosphoglycerate-independent phosphoglycerate mutase, found in Mesoplasma florum (strain ATCC 33453 / NBRC 100688 / NCTC 11704 / L1) (Acholeplasma florum).